An 85-amino-acid polypeptide reads, in one-letter code: Putative membrane protein insertion efficiency factor (85 aa).

The protein belongs to the UPF0161 family.

The protein localises to the cell inner membrane. Its function is as follows. Could be involved in insertion of integral membrane proteins into the membrane. This is Putative membrane protein insertion efficiency factor from Escherichia coli O157:H7.